A 247-amino-acid polypeptide reads, in one-letter code: Phosphoribosylaminoimidazole-succinocarboxamide synthase (247 aa).

Belongs to the SAICAR synthetase family.

The enzyme catalyses 5-amino-1-(5-phospho-D-ribosyl)imidazole-4-carboxylate + L-aspartate + ATP = (2S)-2-[5-amino-1-(5-phospho-beta-D-ribosyl)imidazole-4-carboxamido]succinate + ADP + phosphate + 2 H(+). Its pathway is purine metabolism; IMP biosynthesis via de novo pathway; 5-amino-1-(5-phospho-D-ribosyl)imidazole-4-carboxamide from 5-amino-1-(5-phospho-D-ribosyl)imidazole-4-carboxylate: step 1/2. This Herpetosiphon aurantiacus (strain ATCC 23779 / DSM 785 / 114-95) protein is Phosphoribosylaminoimidazole-succinocarboxamide synthase.